The sequence spans 399 residues: Acetate kinase (399 aa).

Asn-7 contacts Mg(2+). Position 14 (Lys-14) interacts with ATP. Arg-91 is a substrate binding site. Asp-148 (proton donor/acceptor) is an active-site residue. Residues 208–212 (HLGNG) and 283–285 (DFR) each bind ATP. Residue Glu-384 coordinates Mg(2+).

The protein belongs to the acetokinase family. Homodimer. Mg(2+) is required as a cofactor. The cofactor is Mn(2+).

The protein localises to the cytoplasm. The enzyme catalyses acetate + ATP = acetyl phosphate + ADP. Its pathway is metabolic intermediate biosynthesis; acetyl-CoA biosynthesis; acetyl-CoA from acetate: step 1/2. Its function is as follows. Catalyzes the formation of acetyl phosphate from acetate and ATP. Can also catalyze the reverse reaction. The chain is Acetate kinase from Dictyoglomus thermophilum (strain ATCC 35947 / DSM 3960 / H-6-12).